The following is a 181-amino-acid chain: Large ribosomal subunit protein uL5 (181 aa).

Belongs to the universal ribosomal protein uL5 family. In terms of assembly, part of the 50S ribosomal subunit; part of the 5S rRNA/L5/L18/L25 subcomplex. Contacts the 5S rRNA and the P site tRNA. Forms a bridge to the 30S subunit in the 70S ribosome.

Its function is as follows. This is one of the proteins that bind and probably mediate the attachment of the 5S RNA into the large ribosomal subunit, where it forms part of the central protuberance. In the 70S ribosome it contacts protein S13 of the 30S subunit (bridge B1b), connecting the 2 subunits; this bridge is implicated in subunit movement. Contacts the P site tRNA; the 5S rRNA and some of its associated proteins might help stabilize positioning of ribosome-bound tRNAs. The polypeptide is Large ribosomal subunit protein uL5 (Trichodesmium erythraeum (strain IMS101)).